Reading from the N-terminus, the 188-residue chain is uncharacterized protein (188 aa).

Residues 133-153 are disordered; that stretch reads PKGRPTMKLQYPKMPPKPKTR.

Belongs to the IS150/IS1296 orfA family.

This is an uncharacterized protein from Haemophilus influenzae (strain ATCC 51907 / DSM 11121 / KW20 / Rd).